Consider the following 244-residue polypeptide: Cell division protein DivIB (244 aa).

The Cytoplasmic segment spans residues 1–6 (MKIKWP). Residues 7–27 (LQLWISLAVFVTIAVGTLLLL) form a helical membrane-spanning segment. The region spanning 28-104 (QPWQTIKTVT…IDIAEKVTAG (77 aa)) is the POTRA domain. Residues 28 to 244 (QPWQTIKTVT…KADNKAHQKQ (217 aa)) are Extracellular-facing.

It belongs to the FtsQ/DivIB family. DivIB subfamily.

It is found in the cell membrane. Its function is as follows. Cell division protein that may be involved in stabilizing or promoting the assembly of the division complex. This Leuconostoc kimchii (strain IMSNU 11154 / KCTC 2386 / IH25) protein is Cell division protein DivIB.